The chain runs to 282 residues: Armadillo repeat-containing protein 1 (282 aa).

Met-1 is modified (N-acetylmethionine). An ARM repeat occupies 39–81 (GCLPGLILSMDHPNPPVVHSALLALRYLAECRANREKMKGELG). The residue at position 137 (Thr-137) is a Phosphothreonine. 4 positions are modified to phosphoserine: Ser-189, Ser-246, Ser-260, and Ser-267. A disordered region spans residues 239 to 261 (DYLPEDESPTKEQDKAVSRVGSH). Residues 246–255 (SPTKEQDKAV) are compositionally biased toward basic and acidic residues.

As to quaternary structure, interacts with mitochondrial contact site and cristae organizing system (MICOS) complex components IMMT/MIC60 and MICOS10/MIC10. Interacts with mitochondrial outer membrane sorting assembly machinery (SAM) complex components SAMM50 and MTX1.

It is found in the cytoplasm. Its subcellular location is the mitochondrion. It localises to the mitochondrion outer membrane. In association with mitochondrial contact site and cristae organizing system (MICOS) complex components and mitochondrial outer membrane sorting assembly machinery (SAM) complex components may regulate mitochondrial dynamics playing a role in determining mitochondrial length, distribution and motility. This Pongo abelii (Sumatran orangutan) protein is Armadillo repeat-containing protein 1 (ARMC1).